Consider the following 59-residue polypeptide: Cecropin-C (59 aa).

A signal peptide spans 1 to 23 (MNFKLIFLVALVLMAAFLGQTEG). Position 58 is a valine amide (V58).

Belongs to the cecropin family.

The protein resides in the secreted. In terms of biological role, cecropins have lytic and antibacterial activity against several Gram-positive and Gram-negative bacteria. The sequence is that of Cecropin-C (CecC) from Anopheles gambiae (African malaria mosquito).